The following is a 216-amino-acid chain: Refilin-A (216 aa).

The segment at 1-83 (MVGHLHLQGM…LPNPPASEMR (83 aa)) is disordered. Residues 12-22 (DSLKEQGREGL) show a composition bias toward basic and acidic residues. The segment covering 29–39 (GLPPSPSPSPP) has biased composition (pro residues). Low complexity predominate over residues 57 to 71 (ASSEPPGPSEARAPP). Arg163 carries the asymmetric dimethylarginine modification.

Belongs to the Refilin family. Interacts with FLNA and FLNB.

The protein resides in the cytoplasm. The protein localises to the cytoskeleton. Its function is as follows. Involved in the regulation of the perinuclear actin network and nuclear shape through interaction with filamins. Plays an essential role in actin cytoskeleton formation in developing cartilaginous cells. This Homo sapiens (Human) protein is Refilin-A.